Here is a 191-residue protein sequence, read N- to C-terminus: Methylated-DNA--protein-cysteine methyltransferase (191 aa).

DNA contacts are provided by tyrosine 120 and arginine 134. Catalysis depends on cysteine 151, which acts as the Nucleophile; methyl group acceptor.

It belongs to the MGMT family.

It is found in the nucleus. It carries out the reaction a 6-O-methyl-2'-deoxyguanosine in DNA + L-cysteinyl-[protein] = S-methyl-L-cysteinyl-[protein] + a 2'-deoxyguanosine in DNA. The catalysed reaction is a 4-O-methyl-thymidine in DNA + L-cysteinyl-[protein] = a thymidine in DNA + S-methyl-L-cysteinyl-[protein]. Functionally, involved in the cellular defense against the biological effects of O6-methylguanine (O6-MeG) and O4-methylthymine (O4-MeT) in DNA. Repairs the methylated nucleobase in DNA by stoichiometrically transferring the methyl group to a cysteine residue in the enzyme. This is a suicide reaction: the enzyme is irreversibly inactivated. The sequence is that of Methylated-DNA--protein-cysteine methyltransferase (MGT1) from Debaryomyces hansenii (strain ATCC 36239 / CBS 767 / BCRC 21394 / JCM 1990 / NBRC 0083 / IGC 2968) (Yeast).